Reading from the N-terminus, the 643-residue chain is Sodium/iodide cotransporter (643 aa).

Over 1–14 (MEAVETGERPTFGA) the chain is Extracellular. A helical membrane pass occupies residues 15 to 31 (WDYGVFALMLLVSTGIG). Residues 32 to 56 (LWVGLARGGQRSAEDFFTGGRRLAA) lie on the Cytoplasmic side of the membrane. The discontinuously helical transmembrane segment at 57-80 (LPVGLSLSASFMSAVQVLGVPSEA) threads the bilayer. Na(+) contacts are provided by serine 69, valine 71, and glutamine 72. Residue valine 76 participates in iodide binding. At 81 to 84 (YRYG) the chain is on the extracellular side. The helical transmembrane segment at 85-105 (LKFLWMCLGQLLNSVLTALLF) threads the bilayer. An iodide-binding site is contributed by methionine 90. At 106–130 (MPVFYRLGLTSTYEYLEMRFSRAVR) the chain is on the cytoplasmic side. The helical transmembrane segment at 131-157 (LCGTLQYIVATMLYTGIVIYAPALILN) threads the bilayer. Position 144 (tyrosine 144) interacts with Na(+). Residues 158 to 163 (QVTGLD) lie on the Extracellular side of the membrane. A helical transmembrane segment spans residues 164-181 (IWASLLSTGIICTFYTAV). Residues 182–189 (GGMKAVVW) lie on the Cytoplasmic side of the membrane. A helical membrane pass occupies residues 190–208 (TDVFQVVVMLSGFWVVLAR). Residues 209 to 243 (GVMLVGGPRQVLTLAQNHSRINLMDFNPDPRSRYT) are Extracellular-facing. A discontinuously helical membrane pass occupies residues 244-266 (FWTFVVGGTLVWLSMYGVNQAQV). Iodide is bound at residue tryptophan 255. Na(+) is bound at residue methionine 258. Topologically, residues 267-278 (QRYVACRTEKQA) are cytoplasmic. A helical membrane pass occupies residues 279–301 (KLALLINQVGLFLIVSSAACCGI). At 302-335 (VMFVFYTDCDPLLLGRISAPDQYMPLLVLDIFED) the chain is on the extracellular side. A helical transmembrane segment spans residues 336 to 363 (LPGVPGLFLACAYSGTLSTASTSINAMA). Residues 364–386 (AVTVEDLIKPRLRSLAPRKLVII) lie on the Cytoplasmic side of the membrane. The chain crosses the membrane as a helical span at residues 387-408 (SKGLSLIYGSACLTVAALSSLL). Residues 409–411 (GGG) are Extracellular-facing. A helical transmembrane segment spans residues 412-437 (VLQGSFTVMGVISGPLLGAFILGMFL). Residue leucine 413 coordinates iodide. Residues serine 416 and phenylalanine 417 each coordinate Na(+). Phenylalanine 417 contributes to the iodide binding site. Residues 438 to 441 (PACN) are Cytoplasmic-facing. A helical transmembrane segment spans residues 442–465 (TPGVLAGLGAGLALSLWVALGATL). Over 466–525 (YPPSEQTMRVLPSSAARCVALSVNASGLLDPALLPANDSSRAPSSGMDASRPALADSFYA) the chain is Extracellular. N-linked (GlcNAc...) asparagine glycosylation is found at asparagine 489 and asparagine 502. A helical transmembrane segment spans residues 526 to 550 (ISYLYYGALGTLTTVLCGALISCLT). The Cytoplasmic portion of the chain corresponds to 551-643 (GPTKRSTLAP…GGRDQQETNL (93 aa)). Serine 556 carries the phosphoserine; by PKA modification. The tract at residues 623 to 643 (AGSWTPCVGHDGGRDQQETNL) is disordered. Residues 633-643 (DGGRDQQETNL) show a composition bias toward basic and acidic residues.

It belongs to the sodium:solute symporter (SSF) (TC 2.A.21) family. In terms of assembly, monomer. Post-translationally, glycosylated. In terms of tissue distribution, expression is primarily in thyroid tissue, but also to a lower extent in mammary gland and ovary. Expression is reduced in tumors.

It is found in the cell membrane. The protein resides in the cytoplasm. The catalysed reaction is iodide(out) + 2 Na(+)(out) = iodide(in) + 2 Na(+)(in). It catalyses the reaction chlorate(out) + 2 Na(+)(out) = chlorate(in) + 2 Na(+)(in). It carries out the reaction thiocyanate(out) + 2 Na(+)(out) = thiocyanate(in) + 2 Na(+)(in). The enzyme catalyses nitrate(out) + 2 Na(+)(out) = nitrate(in) + 2 Na(+)(in). The catalysed reaction is selenocyanate(out) + 2 Na(+)(out) = selenocyanate(in) + 2 Na(+)(in). Its activity is regulated as follows. Dysidenin and perchlorate inhibit iodide transport activity. Oxyanions inhibit iodide transport activity by blocking the binding sites for iodide and one of the sodium ions. Sodium:iodide symporter that mediates the transport of iodide into the thyroid gland. Can also mediate the transport of chlorate, thiocynate, nitrate and selenocynate. This Homo sapiens (Human) protein is Sodium/iodide cotransporter (SLC5A5).